We begin with the raw amino-acid sequence, 154 residues long: Myoglobin (154 aa).

The region spanning 2 to 148 (GLSDDEWNHV…FRNDMASKYK (147 aa)) is the Globin domain. His-65 serves as a coordination point for nitrite. His-65 serves as a coordination point for O2. A heme b-binding site is contributed by His-94.

Belongs to the globin family. Monomeric.

It is found in the cytoplasm. The protein localises to the sarcoplasm. It carries out the reaction Fe(III)-heme b-[protein] + nitric oxide + H2O = Fe(II)-heme b-[protein] + nitrite + 2 H(+). It catalyses the reaction H2O2 + AH2 = A + 2 H2O. Monomeric heme protein which primary function is to store oxygen and facilitate its diffusion within muscle tissues. Reversibly binds oxygen through a pentacoordinated heme iron and enables its timely and efficient release as needed during periods of heightened demand. Depending on the oxidative conditions of tissues and cells, and in addition to its ability to bind oxygen, it also has a nitrite reductase activity whereby it regulates the production of bioactive nitric oxide. Under stress conditions, like hypoxia and anoxia, it also protects cells against reactive oxygen species thanks to its pseudoperoxidase activity. This Chelonia mydas (Green sea-turtle) protein is Myoglobin (MB).